Consider the following 517-residue polypeptide: Mitochondrial division protein fszA (517 aa).

GTP is bound by residues glycine 60–asparagine 64, glycine 147–glycine 149, glutamate 178, arginine 182, and aspartate 225. Residues phenylalanine 496–glutamate 517 form a disordered region. Positions threonine 497–glutamate 517 are enriched in low complexity.

The protein belongs to the FtsZ family.

The protein resides in the mitochondrion matrix. Its function is as follows. Probably involved in mitochondrion division process. When overexpressed, induces mitochondrial tubule formation. Binds to and hydrolyzes GTP. In Dictyostelium discoideum (Social amoeba), this protein is Mitochondrial division protein fszA (fszA).